We begin with the raw amino-acid sequence, 99 residues long: Integration host factor subunit alpha (99 aa).

This sequence belongs to the bacterial histone-like protein family. Heterodimer of an alpha and a beta chain.

Functionally, this protein is one of the two subunits of integration host factor, a specific DNA-binding protein that functions in genetic recombination as well as in transcriptional and translational control. The protein is Integration host factor subunit alpha of Stenotrophomonas maltophilia (strain R551-3).